A 254-amino-acid chain; its full sequence is 3-deoxy-manno-octulosonate cytidylyltransferase (254 aa).

It belongs to the KdsB family.

Its subcellular location is the cytoplasm. It carries out the reaction 3-deoxy-alpha-D-manno-oct-2-ulosonate + CTP = CMP-3-deoxy-beta-D-manno-octulosonate + diphosphate. Its pathway is nucleotide-sugar biosynthesis; CMP-3-deoxy-D-manno-octulosonate biosynthesis; CMP-3-deoxy-D-manno-octulosonate from 3-deoxy-D-manno-octulosonate and CTP: step 1/1. The protein operates within bacterial outer membrane biogenesis; lipopolysaccharide biosynthesis. Functionally, activates KDO (a required 8-carbon sugar) for incorporation into bacterial lipopolysaccharide in Gram-negative bacteria. The protein is 3-deoxy-manno-octulosonate cytidylyltransferase of Haemophilus influenzae (strain 86-028NP).